The following is a 100-amino-acid chain: uncharacterized protein (100 aa).

The chain crosses the membrane as a helical span at residues 62-82 (IPIVIIVSIFILLIIGSISLY).

The protein localises to the membrane. This is an uncharacterized protein from Dictyostelium discoideum (Social amoeba).